A 213-amino-acid chain; its full sequence is Imidazole glycerol phosphate synthase subunit HisH 1 (213 aa).

The Glutamine amidotransferase type-1 domain occupies 3 to 213 (SVSILDYGVG…LSIIQQFLQI (211 aa)). The active-site Nucleophile is Cys81. Active-site residues include His195 and Glu197.

In terms of assembly, heterodimer of HisH and HisF.

The protein localises to the cytoplasm. It carries out the reaction 5-[(5-phospho-1-deoxy-D-ribulos-1-ylimino)methylamino]-1-(5-phospho-beta-D-ribosyl)imidazole-4-carboxamide + L-glutamine = D-erythro-1-(imidazol-4-yl)glycerol 3-phosphate + 5-amino-1-(5-phospho-beta-D-ribosyl)imidazole-4-carboxamide + L-glutamate + H(+). The enzyme catalyses L-glutamine + H2O = L-glutamate + NH4(+). Its pathway is amino-acid biosynthesis; L-histidine biosynthesis; L-histidine from 5-phospho-alpha-D-ribose 1-diphosphate: step 5/9. Its function is as follows. IGPS catalyzes the conversion of PRFAR and glutamine to IGP, AICAR and glutamate. The HisH subunit provides the glutamine amidotransferase activity that produces the ammonia necessary to HisF for the synthesis of IGP and AICAR. This chain is Imidazole glycerol phosphate synthase subunit HisH 1, found in Legionella pneumophila (strain Lens).